A 1347-amino-acid chain; its full sequence is Protein HUA2-LIKE 3 (1347 aa).

The PWWP domain maps to 24–81 (VGDLVLAKVKGFPAWPAVVDEPEKWGHSADSKKVTVHFFGTQQIAFCNHGDVESFTEE). 3 disordered regions span residues 110–137 (KLKQ…TSQL), 251–320 (DGGP…SGSK), and 383–402 (DSCQ…PCEE). Residues 127–137 (TAGSSGNTSQL) show a composition bias toward polar residues. Residues 302-314 (VESNNNSRNEGNG) are compositionally biased toward low complexity. Residues 390 to 402 (NSHERLNERPCEE) are compositionally biased toward basic and acidic residues. In terms of domain architecture, CID spans 845-986 (DVQCTVESFE…HHIRELDSLS (142 aa)). Disordered regions lie at residues 1037-1069 (RDED…VTPS), 1121-1140 (TSHQ…QNAQ), 1147-1223 (YSNG…YSYM), and 1259-1347 (RMRP…WHQR). Residues 1038-1049 (DEDEGSDSDGGD) are compositionally biased toward acidic residues. Positions 1054–1069 (TPEHESRSLEEHVTPS) are enriched in basic and acidic residues. A compositionally biased stretch (polar residues) spans 1181–1191 (PSYSSRVSLSK). The segment covering 1208-1217 (SSHPPPPPPS) has biased composition (pro residues). A compositionally biased stretch (basic and acidic residues) spans 1259-1272 (RMRPEPCENRDNWR).

Expressed throughout young primordia, and vegetative and reproductive apices.

It localises to the nucleus. In terms of biological role, probable transcription factor that acts with partial redundancy with HULK1 and HULK2. Plays diverse and essential roles in the control of plant development, physiology and flowering time. This chain is Protein HUA2-LIKE 3, found in Arabidopsis thaliana (Mouse-ear cress).